A 72-amino-acid chain; its full sequence is Enterobactin biosynthesis protein YbdZ (72 aa).

It belongs to the MbtH-like family.

Its function is as follows. Involved in the biosynthesis of the siderophore enterobactin (enterochelin), which is a macrocyclic trimeric lactone of N-(2,3-dihydroxybenzoyl)-serine. Plays a role in the catalytic function of EntF. It is required for adenylation of amino acids in non-ribosomal peptide biosynthesis. The chain is Enterobactin biosynthesis protein YbdZ from Escherichia coli (strain K12).